We begin with the raw amino-acid sequence, 491 residues long: tRNA-2-methylthio-N(6)-dimethylallyladenosine synthase (491 aa).

The 117-residue stretch at 3–119 folds into the MTTase N-terminal domain; that stretch reads RSYQIRTYGC…LPTLLERARH (117 aa). Residues cysteine 12, cysteine 48, cysteine 82, cysteine 156, cysteine 160, and cysteine 163 each coordinate [4Fe-4S] cluster. A Radical SAM core domain is found at 142–372; it reads RESAYSGWVS…IELQNQISWD (231 aa). The TRAM domain occupies 375–446; sequence KELVGRSVEL…PHHLVADSEI (72 aa).

Belongs to the methylthiotransferase family. MiaB subfamily. Monomer. It depends on [4Fe-4S] cluster as a cofactor.

Its subcellular location is the cytoplasm. It catalyses the reaction N(6)-dimethylallyladenosine(37) in tRNA + (sulfur carrier)-SH + AH2 + 2 S-adenosyl-L-methionine = 2-methylsulfanyl-N(6)-dimethylallyladenosine(37) in tRNA + (sulfur carrier)-H + 5'-deoxyadenosine + L-methionine + A + S-adenosyl-L-homocysteine + 2 H(+). In terms of biological role, catalyzes the methylthiolation of N6-(dimethylallyl)adenosine (i(6)A), leading to the formation of 2-methylthio-N6-(dimethylallyl)adenosine (ms(2)i(6)A) at position 37 in tRNAs that read codons beginning with uridine. The sequence is that of tRNA-2-methylthio-N(6)-dimethylallyladenosine synthase from Saccharopolyspora erythraea (strain ATCC 11635 / DSM 40517 / JCM 4748 / NBRC 13426 / NCIMB 8594 / NRRL 2338).